The following is a 164-amino-acid chain: PTS system sorbose-specific EIIB component (164 aa).

Residues methionine 1–glutamate 164 form the PTS EIIB type-4 domain. Histidine 14 (pros-phosphohistidine intermediate) is an active-site residue. Histidine 14 carries the phosphohistidine; by EIIA modification.

It is found in the cytoplasm. The catalysed reaction is keto-L-sorbose(out) + N(pros)-phospho-L-histidyl-[protein] = L-sorbose 1-phosphate(in) + L-histidyl-[protein]. The phosphoenolpyruvate-dependent sugar phosphotransferase system (PTS), a major carbohydrate active transport system, catalyzes the phosphorylation of incoming sugar substrates concomitant with their translocation across the cell membrane. The enzyme II SorABCD PTS system is involved in L-sorbose transport. In Lacticaseibacillus casei (Lactobacillus casei), this protein is PTS system sorbose-specific EIIB component.